The following is a 667-amino-acid chain: Tail spike protein (667 aa).

Residues E360, D393, and D396 contribute to the active site.

This sequence belongs to the P22likevirus tail fiber protein family. In terms of assembly, homotrimer. Interacts with the host O-antigen lipopolysaccharides; this interaction induces cleavage of host O-antigen. Interacts with tail hub protein gp10; this interaction anchors 6 fibers onto the tail hub hexamer.

Its subcellular location is the virion. In terms of biological role, structural component of the short non-contractile tail. The tail comprises six spikes that mediate primary attachment to the host cell lipopolysaccharides (LPS) and display endorhamnosidase enzymatic activity, hydrolyzing the alpha-1,3-O-glycosidic linkage between rhamnose and galactose of the O-antigen polysaccharide. Digestion of the LPS brings the capsid near the cell outer membrane. The polypeptide is Tail spike protein (9) (Salmonella phage P22 (Bacteriophage P22)).